Consider the following 277-residue polypeptide: Methyltransferase adrK (277 aa).

S-adenosyl-L-methionine-binding positions include 123–124 (DL), 150–151 (DV), and 151–152 (VL).

It belongs to the class I-like SAM-binding methyltransferase superfamily. In terms of assembly, homodimer.

The protein operates within secondary metabolite biosynthesis; terpenoid biosynthesis. In terms of biological role, methyltransferase; part of the gene cluster that mediates the biosynthesis of andrastins, meroterpenoid compounds that exhibit inhibitory activity against ras farnesyltransferase, suggesting that they could be promising leads for antitumor agents. The first step of the pathway is the synthesis of 3,5-dimethylorsellinic acid (DMOA) by the polyketide synthase adrD via condensation of one acetyl-CoA starter unit with 3 malonyl-CoA units and 2 methylations. DMAO is then converted to farnesyl-DMAO by the prenyltransferase adrG. The methyltransferase adrK catalyzes the methylation of the carboxyl group of farnesyl-DMAO to farnesyl-DMAO methyl ester which is further converted to epoxyfarnesyl-DMAO methyl ester by the FAD-dependent monooxygenase adrH. The terpene cyclase adrI then catalyzes the carbon skeletal rearrangement to generate the andrastin E, the first compound in the pathway having the andrastin scaffold, with the tetracyclic ring system. The post-cyclization tailoring enzymes adrF, adrE, adrJ, and adrA, are involved in the conversion of andrastin E into andrastin A. The short chain dehydrogenase adrF is responsible for the oxidation of the C-3 a hydroxyl group of andrastin E to yield the corresponding ketone, andrastin D. The ketoreductase adrE stereoselectively reduces the carbonyl moiety to reverse the stereochemistry of the C-3 position to yield andrastin F. The acetyltransferase adrJ is the acetyltransferase that attaches the acetyl group to the C-3 hydroxyl group of andrastin F to yield andrastin C. Finally, the cytochrome P450 monooxygenase adrA catalyzes two sequential oxidation reactions of the C-23 methyl group, to generate the corresponding alcohol andrastin B, and aldehyde andrastin A. The protein is Methyltransferase adrK of Penicillium rubens (strain ATCC 28089 / DSM 1075 / NRRL 1951 / Wisconsin 54-1255) (Penicillium chrysogenum).